Here is a 351-residue protein sequence, read N- to C-terminus: Probable sugar phosphate/phosphate translocator At5g11230 (351 aa).

The next 10 helical transmembrane spans lie at 15–35 (IVLS…VIVY), 49–69 (FPIS…FLII), 89–109 (VVPI…AYIY), 113–133 (SFIQ…GVLF), 141–161 (DTMM…YGEA), 165–185 (VWGV…LVLI), 205–225 (VAPC…FPVL), 236–256 (AIFG…FLLV), 263–283 (TMNV…WSVI), and 286–306 (TVTP…AYYN). Positions 38 to 156 (YILDKKMYNW…LSISFGVAIA (119 aa)) constitute an EamA domain. A disordered region spans residues 321–351 (KKIQQADEESGRLLEEREGDVEGKKNDQSGN).

This sequence belongs to the TPT transporter family. TPT (TC 2.A.7.9) subfamily.

It is found in the membrane. This is Probable sugar phosphate/phosphate translocator At5g11230 from Arabidopsis thaliana (Mouse-ear cress).